Here is a 713-residue protein sequence, read N- to C-terminus: Polyribonucleotide nucleotidyltransferase (713 aa).

Mg(2+) is bound by residues Asp488 and Asp494. Positions 555-614 (PRIEVMNIPTDKIRDVIGSGGKVIREIVEKTGAKINIEDDGTVKIASSNGKEIEAAKKWI) constitute a KH domain. One can recognise an S1 motif domain in the interval 624-692 (GEIYEGTVVK…ERGKVRLSMK (69 aa)).

Belongs to the polyribonucleotide nucleotidyltransferase family. Mg(2+) serves as cofactor.

Its subcellular location is the cytoplasm. It catalyses the reaction RNA(n+1) + phosphate = RNA(n) + a ribonucleoside 5'-diphosphate. Involved in mRNA degradation. Catalyzes the phosphorolysis of single-stranded polyribonucleotides processively in the 3'- to 5'-direction. In Brucella anthropi (strain ATCC 49188 / DSM 6882 / CCUG 24695 / JCM 21032 / LMG 3331 / NBRC 15819 / NCTC 12168 / Alc 37) (Ochrobactrum anthropi), this protein is Polyribonucleotide nucleotidyltransferase.